Consider the following 419-residue polypeptide: Ribosome biogenesis protein WDR12 homolog (419 aa).

The interval 10–91 is ubiquitin-like (UBL) domain; sequence VQVHLKTKQE…EDAIDIEYVE (82 aa). 7 WD repeats span residues 103–140, 142–184, 191–230, 249–287, 289–328, 334–374, and 378–416; these read LHDDWVSAVKACGKWILTGCYDNTINIWTNKGKHKLTI, GHTA…NAVE, GHERGVDSVCVSPDAQRFATGSWDTMLKIWSAGLDDTSEG, GHRESISAVQWMDATTLVTGSWDHTLKVWDLQLEGIKTE, STNKSIFDASYSKLNRLIVTASADKNLRLYDARTNQGSVV, GHNA…APLY, and GHGEKVLDIDWSNPKYIVSGGADNTVRVFKSGKATIENM.

The protein belongs to the WD repeat WDR12/YTM1 family.

The protein localises to the nucleus. The protein resides in the nucleolus. Its subcellular location is the nucleoplasm. Required for maturation of ribosomal RNAs and formation of the large ribosomal subunit. In Drosophila virilis (Fruit fly), this protein is Ribosome biogenesis protein WDR12 homolog.